Here is a 184-residue protein sequence, read N- to C-terminus: ATP synthase subunit b, chloroplastic (184 aa).

Residues 27 to 49 form a helical membrane-spanning segment; it reads LATNPINLSVVLGVLIFFGKGVL.

Belongs to the ATPase B chain family. As to quaternary structure, F-type ATPases have 2 components, F(1) - the catalytic core - and F(0) - the membrane proton channel. F(1) has five subunits: alpha(3), beta(3), gamma(1), delta(1), epsilon(1). F(0) has four main subunits: a(1), b(1), b'(1) and c(10-14). The alpha and beta chains form an alternating ring which encloses part of the gamma chain. F(1) is attached to F(0) by a central stalk formed by the gamma and epsilon chains, while a peripheral stalk is formed by the delta, b and b' chains.

It localises to the plastid. It is found in the chloroplast thylakoid membrane. In terms of biological role, f(1)F(0) ATP synthase produces ATP from ADP in the presence of a proton or sodium gradient. F-type ATPases consist of two structural domains, F(1) containing the extramembraneous catalytic core and F(0) containing the membrane proton channel, linked together by a central stalk and a peripheral stalk. During catalysis, ATP synthesis in the catalytic domain of F(1) is coupled via a rotary mechanism of the central stalk subunits to proton translocation. Its function is as follows. Component of the F(0) channel, it forms part of the peripheral stalk, linking F(1) to F(0). This is ATP synthase subunit b, chloroplastic from Atropa belladonna (Belladonna).